A 334-amino-acid polypeptide reads, in one-letter code: Protein-methionine-sulfoxide reductase catalytic subunit MsrP (334 aa).

The segment at residues 1 to 44 (MKKNQFLKESDVTAESVFFMKRRQVLKALGISAAALSLPHAAHA) is a signal peptide (tat-type signal). Mo-molybdopterin-binding positions include asparagine 88, 91-92 (YE), cysteine 146, threonine 181, asparagine 233, arginine 238, and 249-251 (GIK).

It belongs to the MsrP family. As to quaternary structure, heterodimer of a catalytic subunit (MsrP) and a heme-binding subunit (MsrQ). It depends on Mo-molybdopterin as a cofactor. In terms of processing, predicted to be exported by the Tat system. The position of the signal peptide cleavage has not been experimentally proven.

Its subcellular location is the periplasm. It catalyses the reaction L-methionyl-[protein] + a quinone + H2O = L-methionyl-(S)-S-oxide-[protein] + a quinol. The catalysed reaction is L-methionyl-[protein] + a quinone + H2O = L-methionyl-(R)-S-oxide-[protein] + a quinol. In terms of biological role, part of the MsrPQ system that repairs oxidized periplasmic proteins containing methionine sulfoxide residues (Met-O), using respiratory chain electrons. Thus protects these proteins from oxidative-stress damage caused by reactive species of oxygen and chlorine generated by the host defense mechanisms. MsrPQ is essential for the maintenance of envelope integrity under bleach stress, rescuing a wide series of structurally unrelated periplasmic proteins from methionine oxidation, including the primary periplasmic chaperone SurA and the lipoprotein Pal. The catalytic subunit MsrP is non-stereospecific, being able to reduce both (R-) and (S-) diastereoisomers of methionine sulfoxide. This Escherichia coli O127:H6 (strain E2348/69 / EPEC) protein is Protein-methionine-sulfoxide reductase catalytic subunit MsrP.